A 240-amino-acid chain; its full sequence is Triosephosphate isomerase (240 aa).

6 to 8 (NLK) contacts substrate. H88 (electrophile) is an active-site residue. The active-site Proton acceptor is the E157. Residues G163 and S193 each coordinate substrate.

This sequence belongs to the triosephosphate isomerase family. As to quaternary structure, homodimer.

The protein localises to the cytoplasm. The enzyme catalyses D-glyceraldehyde 3-phosphate = dihydroxyacetone phosphate. It participates in carbohydrate biosynthesis; gluconeogenesis. Its pathway is carbohydrate degradation; glycolysis; D-glyceraldehyde 3-phosphate from glycerone phosphate: step 1/1. Its function is as follows. Involved in the gluconeogenesis. Catalyzes stereospecifically the conversion of dihydroxyacetone phosphate (DHAP) to D-glyceraldehyde-3-phosphate (G3P). In Sulfurimonas denitrificans (strain ATCC 33889 / DSM 1251) (Thiomicrospira denitrificans (strain ATCC 33889 / DSM 1251)), this protein is Triosephosphate isomerase.